The chain runs to 312 residues: tRNA uridine(34) hydroxylase (312 aa).

Positions 130-225 (RGDEVVFFDG…YGEKFGNQGL (96 aa)) constitute a Rhodanese domain. The active-site Cysteine persulfide intermediate is the C185.

Belongs to the TrhO family.

The enzyme catalyses uridine(34) in tRNA + AH2 + O2 = 5-hydroxyuridine(34) in tRNA + A + H2O. Functionally, catalyzes oxygen-dependent 5-hydroxyuridine (ho5U) modification at position 34 in tRNAs. The chain is tRNA uridine(34) hydroxylase from Corynebacterium efficiens (strain DSM 44549 / YS-314 / AJ 12310 / JCM 11189 / NBRC 100395).